The chain runs to 127 residues: Small ribosomal subunit protein uS13 (127 aa).

The disordered stretch occupies residues 96 to 127 (LPCHGQRTSTNARTRKGPKRTAVKKKGAAKKK). Residues 108-127 (RTRKGPKRTAVKKKGAAKKK) are compositionally biased toward basic residues.

Belongs to the universal ribosomal protein uS13 family. Part of the 30S ribosomal subunit. Forms a loose heterodimer with protein S19. Forms two bridges to the 50S subunit in the 70S ribosome.

Located at the top of the head of the 30S subunit, it contacts several helices of the 16S rRNA. In the 70S ribosome it contacts the 23S rRNA (bridge B1a) and protein L5 of the 50S subunit (bridge B1b), connecting the 2 subunits; these bridges are implicated in subunit movement. Contacts the tRNAs in the A and P-sites. The protein is Small ribosomal subunit protein uS13 of Desulfosudis oleivorans (strain DSM 6200 / JCM 39069 / Hxd3) (Desulfococcus oleovorans).